Here is a 349-residue protein sequence, read N- to C-terminus: Increased DNA methylation 2 (349 aa).

The segment at 210 to 230 (EDNAGTCTSGEESDVAAKPEV) is disordered. Residues 233-349 (EAHGGLMVGL…VMKNLQKQTV (117 aa)) form the sHSP domain.

It belongs to the small heat shock protein (HSP20) family. As to quaternary structure, homodimer or oligomer. May form an 16-mer complex. Interacts with MBD7 (via C-terminus). Interacts with IDM1 (via N-terminus). Interacts with IMD3. Part of a complex made of MBD7, IDM1, IDM2, IDM3 and ROS1. As to expression, expressed in cotyledons and hypocotyls in young seedlings.

The protein resides in the nucleus. It localises to the nucleoplasm. Its function is as follows. Prevents DNA hypermethylation and transcriptional silencing of transgenes and of some endogenous genes. May act as a molecular chaperone of IDM1, regulating its H3K18 acetylation activity. This chain is Increased DNA methylation 2, found in Arabidopsis thaliana (Mouse-ear cress).